Reading from the N-terminus, the 427-residue chain is tRNA(Ile)-lysidine synthase (427 aa).

25–30 serves as a coordination point for ATP; sequence SGGLDS.

The protein belongs to the tRNA(Ile)-lysidine synthase family.

The protein resides in the cytoplasm. It catalyses the reaction cytidine(34) in tRNA(Ile2) + L-lysine + ATP = lysidine(34) in tRNA(Ile2) + AMP + diphosphate + H(+). Functionally, ligates lysine onto the cytidine present at position 34 of the AUA codon-specific tRNA(Ile) that contains the anticodon CAU, in an ATP-dependent manner. Cytidine is converted to lysidine, thus changing the amino acid specificity of the tRNA from methionine to isoleucine. This Histophilus somni (strain 2336) (Haemophilus somnus) protein is tRNA(Ile)-lysidine synthase.